We begin with the raw amino-acid sequence, 116 residues long: Holo-[acyl-carrier-protein] synthase (116 aa).

Positions 5 and 50 each coordinate Mg(2+).

This sequence belongs to the P-Pant transferase superfamily. AcpS family. The cofactor is Mg(2+).

The protein resides in the cytoplasm. It catalyses the reaction apo-[ACP] + CoA = holo-[ACP] + adenosine 3',5'-bisphosphate + H(+). Transfers the 4'-phosphopantetheine moiety from coenzyme A to a Ser of acyl-carrier-protein. The chain is Holo-[acyl-carrier-protein] synthase from Nitratiruptor sp. (strain SB155-2).